The sequence spans 177 residues: Adenine phosphoribosyltransferase (177 aa).

This sequence belongs to the purine/pyrimidine phosphoribosyltransferase family. In terms of assembly, homodimer.

The protein localises to the cytoplasm. It carries out the reaction AMP + diphosphate = 5-phospho-alpha-D-ribose 1-diphosphate + adenine. The protein operates within purine metabolism; AMP biosynthesis via salvage pathway; AMP from adenine: step 1/1. In terms of biological role, catalyzes a salvage reaction resulting in the formation of AMP, that is energically less costly than de novo synthesis. The sequence is that of Adenine phosphoribosyltransferase from Chlorobaculum tepidum (strain ATCC 49652 / DSM 12025 / NBRC 103806 / TLS) (Chlorobium tepidum).